The chain runs to 367 residues: Dimethyladenosine transferase 1, mitochondrial (367 aa).

Residues 1–16 constitute a mitochondrion transit peptide; it reads MASASRLPPLPALRDF. Residues 30–33, asparagine 31, leucine 33, glycine 58, glutamate 80, aspartate 106, and asparagine 141 each bind S-adenosyl-L-methionine; that span reads QNYL.

Belongs to the class I-like SAM-binding methyltransferase superfamily. rRNA adenine N(6)-methyltransferase family. KsgA subfamily.

The protein resides in the mitochondrion. Probable S-adenosyl-L-methionine-dependent methyltransferase which specifically dimethylates mitochondrial 12S rRNA at the conserved stem loop. Also required for basal transcription of mitochondrial DNA. Stimulates transcription independently of the methyltransferase activity. The polypeptide is Dimethyladenosine transferase 1, mitochondrial (tfbm-1) (Caenorhabditis elegans).